Here is a 523-residue protein sequence, read N- to C-terminus: GMP synthase [glutamine-hydrolyzing] (523 aa).

The Glutamine amidotransferase type-1 domain maps to 8 to 205; that stretch reads KILILDFGSQ…VENICGCARS (198 aa). Catalysis depends on Cys85, which acts as the Nucleophile. Active-site residues include His179 and Glu181. Residues 206 to 398 enclose the GMPS ATP-PPase domain; that stretch reads WTPENIIEDA…LGLPAEMLNR (193 aa). 233 to 239 contacts ATP; it reads SGGVDSS.

As to quaternary structure, homodimer.

It catalyses the reaction XMP + L-glutamine + ATP + H2O = GMP + L-glutamate + AMP + diphosphate + 2 H(+). The protein operates within purine metabolism; GMP biosynthesis; GMP from XMP (L-Gln route): step 1/1. Its function is as follows. Catalyzes the synthesis of GMP from XMP. This is GMP synthase [glutamine-hydrolyzing] from Haemophilus ducreyi (strain 35000HP / ATCC 700724).